The primary structure comprises 326 residues: Phosphate acyltransferase (326 aa).

This sequence belongs to the PlsX family. In terms of assembly, homodimer. Probably interacts with PlsY.

The protein resides in the cytoplasm. The catalysed reaction is a fatty acyl-[ACP] + phosphate = an acyl phosphate + holo-[ACP]. The protein operates within lipid metabolism; phospholipid metabolism. Functionally, catalyzes the reversible formation of acyl-phosphate (acyl-PO(4)) from acyl-[acyl-carrier-protein] (acyl-ACP). This enzyme utilizes acyl-ACP as fatty acyl donor, but not acyl-CoA. The chain is Phosphate acyltransferase from Thermus thermophilus (strain ATCC BAA-163 / DSM 7039 / HB27).